Reading from the N-terminus, the 324-residue chain is Phospho-N-acetylmuramoyl-pentapeptide-transferase (324 aa).

Helical transmembrane passes span 5 to 25, 52 to 72, 77 to 97, 122 to 142, 149 to 169, 176 to 196, 201 to 221, 227 to 247, 253 to 273, and 302 to 322; these read GLLVTAGVAFLISVALSPLFI, PTMGGIVIYVSMMVTTLIMAI, LGAEVSLLLLVTFGYGLIGFL, VIAIAFFLIGKGQAFHTYIMI, FELGWAYFVLVLFMLIGGSNA, LDGLLSGTAAIAFGAFSIIAV, FGVAIFCMAVVGAVLGFLVFN, VFMGDTGSLALGGAIAAVAIL, LLVIIGGVFVAETLSVIIQVI, and VVVTFWSVGFLLAVLGIYIGV.

This sequence belongs to the glycosyltransferase 4 family. MraY subfamily. The cofactor is Mg(2+).

It localises to the cell membrane. The catalysed reaction is UDP-N-acetyl-alpha-D-muramoyl-L-alanyl-gamma-D-glutamyl-meso-2,6-diaminopimeloyl-D-alanyl-D-alanine + di-trans,octa-cis-undecaprenyl phosphate = di-trans,octa-cis-undecaprenyl diphospho-N-acetyl-alpha-D-muramoyl-L-alanyl-D-glutamyl-meso-2,6-diaminopimeloyl-D-alanyl-D-alanine + UMP. It functions in the pathway cell wall biogenesis; peptidoglycan biosynthesis. In terms of biological role, catalyzes the initial step of the lipid cycle reactions in the biosynthesis of the cell wall peptidoglycan: transfers peptidoglycan precursor phospho-MurNAc-pentapeptide from UDP-MurNAc-pentapeptide onto the lipid carrier undecaprenyl phosphate, yielding undecaprenyl-pyrophosphoryl-MurNAc-pentapeptide, known as lipid I. The chain is Phospho-N-acetylmuramoyl-pentapeptide-transferase from Bacillus mycoides (strain KBAB4) (Bacillus weihenstephanensis).